A 478-amino-acid chain; its full sequence is Putative malate transporter YflS (478 aa).

12 helical membrane passes run 12–31, 41–57, 64–81, 96–118, 187–209, 222–244, 277–296, 300–319, 332–354, 364–386, 398–420, and 450–472; these read AVKL…IWFI, AWHL…GFIS, AIAI…TLSI, IVIA…ISYV, GFQG…PLIA, WTSW…PLVI, LSMV…GGSF, ATTT…VLTW, LTWF…VSWF, GFSW…YFFA, AFLA…LAFI, and WSIG…GLWW.

The protein belongs to the SLC13A/DASS transporter (TC 2.A.47) family. DIT1 subfamily.

Its subcellular location is the cell membrane. Might be a malate transporter. This chain is Putative malate transporter YflS (yflS), found in Bacillus subtilis (strain 168).